A 448-amino-acid polypeptide reads, in one-letter code: Phosphohexose mutases (448 aa).

The Phosphoserine intermediate role is filled by serine 97. The Mg(2+) site is built by serine 97, aspartate 237, aspartate 239, and aspartate 241.

The protein belongs to the phosphohexose mutase family. Mg(2+) is required as a cofactor.

It catalyses the reaction alpha-D-glucose 1-phosphate = alpha-D-glucose 6-phosphate. It carries out the reaction alpha-D-mannose 1-phosphate = D-mannose 6-phosphate. It functions in the pathway nucleotide-sugar biosynthesis; GDP-alpha-D-mannose biosynthesis; alpha-D-mannose 1-phosphate from D-fructose 6-phosphate: step 2/2. In terms of biological role, involved in xanthan production. The sequence is that of Phosphohexose mutases (xanA) from Xanthomonas campestris pv. campestris (strain ATCC 33913 / DSM 3586 / NCPPB 528 / LMG 568 / P 25).